A 163-amino-acid polypeptide reads, in one-letter code: 2-C-methyl-D-erythritol 2,4-cyclodiphosphate synthase (163 aa).

D12 and H14 together coordinate a divalent metal cation. 4-CDP-2-C-methyl-D-erythritol 2-phosphate-binding positions include 12–14 and 38–39; these read DVH and HS. Position 46 (H46) interacts with a divalent metal cation. Residues 60 to 62, 136 to 139, F143, and R146 contribute to the 4-CDP-2-C-methyl-D-erythritol 2-phosphate site; these read DIG and TTSE.

The protein belongs to the IspF family. Homotrimer. It depends on a divalent metal cation as a cofactor.

The catalysed reaction is 4-CDP-2-C-methyl-D-erythritol 2-phosphate = 2-C-methyl-D-erythritol 2,4-cyclic diphosphate + CMP. Its pathway is isoprenoid biosynthesis; isopentenyl diphosphate biosynthesis via DXP pathway; isopentenyl diphosphate from 1-deoxy-D-xylulose 5-phosphate: step 4/6. Involved in the biosynthesis of isopentenyl diphosphate (IPP) and dimethylallyl diphosphate (DMAPP), two major building blocks of isoprenoid compounds. Catalyzes the conversion of 4-diphosphocytidyl-2-C-methyl-D-erythritol 2-phosphate (CDP-ME2P) to 2-C-methyl-D-erythritol 2,4-cyclodiphosphate (ME-CPP) with a corresponding release of cytidine 5-monophosphate (CMP). In Xanthomonas campestris pv. campestris (strain 8004), this protein is 2-C-methyl-D-erythritol 2,4-cyclodiphosphate synthase.